The sequence spans 257 residues: MEIKRLPALSDNYIFLLYDADTQTAAVVDPAEPTPVLECLNKLGAQLVAIFNTHHHYDHVGANNQLQQYFPNLCIYGGSEDRGRIPGQQVFLKEGDRVEFGQRVGEVLFVPGHTRAHIAYYFPPKLSQETGELFCGDTLFGGGCGRLFEGTPTQMVNSLTKLRNLPDNTRVWCAHEYTLKNLQFALTVDPDNLVLKNRYHQVKEFRHQGQATVPSILGEEKLTNPFLRWDNSAIQLTIGMTDPARVFGKLRGMKDTF.

Zn(2+) is bound by residues His-54, His-56, Asp-58, His-59, His-113, Asp-137, and His-175.

Belongs to the metallo-beta-lactamase superfamily. Glyoxalase II family. As to quaternary structure, monomer. Zn(2+) is required as a cofactor.

The catalysed reaction is an S-(2-hydroxyacyl)glutathione + H2O = a 2-hydroxy carboxylate + glutathione + H(+). It participates in secondary metabolite metabolism; methylglyoxal degradation; (R)-lactate from methylglyoxal: step 2/2. Its function is as follows. Thiolesterase that catalyzes the hydrolysis of S-D-lactoyl-glutathione to form glutathione and D-lactic acid. The protein is Hydroxyacylglutathione hydrolase of Rippkaea orientalis (strain PCC 8801 / RF-1) (Cyanothece sp. (strain PCC 8801)).